The primary structure comprises 97 residues: YcgL domain-containing protein PSPTO_3921 (97 aa).

A YcgL domain is found at 3–87 (RICSIYRSPK…AEDEYIEHLP (85 aa)).

In Pseudomonas syringae pv. tomato (strain ATCC BAA-871 / DC3000), this protein is YcgL domain-containing protein PSPTO_3921.